The primary structure comprises 112 residues: Ribonuclease P protein component (112 aa).

This sequence belongs to the RnpA family. In terms of assembly, consists of a catalytic RNA component (M1 or rnpB) and a protein subunit.

The catalysed reaction is Endonucleolytic cleavage of RNA, removing 5'-extranucleotides from tRNA precursor.. Its function is as follows. RNaseP catalyzes the removal of the 5'-leader sequence from pre-tRNA to produce the mature 5'-terminus. It can also cleave other RNA substrates such as 4.5S RNA. The protein component plays an auxiliary but essential role in vivo by binding to the 5'-leader sequence and broadening the substrate specificity of the ribozyme. The sequence is that of Ribonuclease P protein component from Mycoplasma mobile (strain ATCC 43663 / 163K / NCTC 11711) (Mesomycoplasma mobile).